Here is a 184-residue protein sequence, read N- to C-terminus: Peptide deformylase (184 aa).

The Fe cation site is built by cysteine 111 and histidine 154. Glutamate 155 is a catalytic residue. Histidine 158 is a Fe cation binding site.

It belongs to the polypeptide deformylase family. The cofactor is Fe(2+).

The enzyme catalyses N-terminal N-formyl-L-methionyl-[peptide] + H2O = N-terminal L-methionyl-[peptide] + formate. Its function is as follows. Removes the formyl group from the N-terminal Met of newly synthesized proteins. Requires at least a dipeptide for an efficient rate of reaction. N-terminal L-methionine is a prerequisite for activity but the enzyme has broad specificity at other positions. This chain is Peptide deformylase, found in Lactobacillus delbrueckii subsp. bulgaricus (strain ATCC 11842 / DSM 20081 / BCRC 10696 / JCM 1002 / NBRC 13953 / NCIMB 11778 / NCTC 12712 / WDCM 00102 / Lb 14).